We begin with the raw amino-acid sequence, 63 residues long: 2-hydroxymuconate tautomerase (63 aa).

The active-site Proton acceptor; via imino nitrogen is proline 2.

This sequence belongs to the 4-oxalocrotonate tautomerase family. As to quaternary structure, homohexamer.

The catalysed reaction is (2Z,4E)-2-hydroxyhexa-2,4-dienedioate = (3E)-2-oxohex-3-enedioate. The protein operates within aromatic compound metabolism; salicylate degradation. Functionally, catalyzes the ketonization of 2-hydroxymuconate stereoselectively to yield 2-oxo-3-hexenedioate. In Comamonas testosteroni (Pseudomonas testosteroni), this protein is 2-hydroxymuconate tautomerase (aphI).